Here is a 360-residue protein sequence, read N- to C-terminus: POU domain, class 5, transcription factor 1 (360 aa).

2 disordered regions span residues 1-48 and 86-137; these read MAGH…SGIG and PPGG…EESQ. The 9aaTAD signature appears at 4 to 12; sequence HLASDFAFS. The residue at position 111 (serine 111) is a Phosphoserine; by MAPK. Lysine 123 is covalently cross-linked (Glycyl lysine isopeptide (Lys-Gly) (interchain with G-Cter in SUMO)). The span at 123–137 shows a compositional bias: basic and acidic residues; sequence KLDKEKLEPNPEESQ. The region spanning 138–212 is the POU-specific domain; the sequence is DIKALQKDLE…LLQKWVEEAD (75 aa). DNA-binding residues include arginine 157 and glutamine 164. DNA-binding regions lie at residues 180–186 and 193–196; these read SQTTICR and SFKN. The segment at residues 230 to 289 is a DNA-binding region (homeobox); sequence RKRKRTSIENRVRGNLESMFLQCPKPTLQQISHIAQQLGLEKDVVRVWFCNRRQKGKRSS. Residue threonine 235 is modified to Phosphothreonine. Phosphoserine occurs at positions 236, 289, 290, and 355. The disordered stretch occupies residues 287-322; the sequence is RSSSDYSQREDFEAAGSPFTGGPVSSPLAPGPHFGT.

Belongs to the POU transcription factor family. Class-5 subfamily. Interacts with PKM. Interacts with WWP2. Interacts with UBE2I and ZSCAN10. Interacts with PCGF1. Interacts with ESRRB; recruits ESRRB near the POU5F1-SOX2 element in the NANOG proximal promoter; the interaction is DNA independent. Interacts with MAPK8 and MAPK9; the interaction allows MAPK8 and MAPK9 to phosphorylate POU5F1 on Ser-355. Interacts (when phosphorylated on Ser-355) with FBXW8. Interacts with FBXW4. Interacts with SOX2 and SOX15; binds synergistically with either SOX2 or SOX15 to DNA. Interacts with DDX56. Post-translationally, sumoylation enhances the protein stability, DNA binding and transactivation activity. Sumoylation is required for enhanced YES1 expression. In terms of processing, ubiquitinated; undergoes 'Lys-63'-linked polyubiquitination by WWP2 leading to proteasomal degradation. ERK1/2-mediated phosphorylation at Ser-111 promotes nuclear exclusion and proteasomal degradation. Phosphorylation at Thr-235 and Ser-236 decrease DNA-binding and alters ability to activate transcription. As to expression, expressed in immature oocytes.

The protein resides in the cytoplasm. It is found in the nucleus. Its function is as follows. Transcription factor that binds to the octamer motif (5'-ATTTGCAT-3'). Forms a trimeric complex with SOX2 or SOX15 on DNA and controls the expression of a number of genes involved in embryonic development such as YES1, FGF4, UTF1 and ZFP206. Critical for early embryogenesis and for embryonic stem cell pluripotency. The polypeptide is POU domain, class 5, transcription factor 1 (POU5F1) (Bos taurus (Bovine)).